The sequence spans 1108 residues: Eukaryotic translation initiation factor 2-alpha kinase 3 (1108 aa).

Residues Met-1–Ala-27 form the signal peptide. The Lumenal portion of the chain corresponds to Val-28–Asp-506. The segment at Glu-71 to Glu-92 is disordered. Asn-253 carries an N-linked (GlcNAc...) asparagine glycan. A helical transmembrane segment spans residues Pro-507–Ala-527. Topologically, residues Thr-528–Asn-1108 are cytoplasmic. Residues Arg-542–Asp-563 are disordered. The region spanning Phe-585–Phe-1069 is the Protein kinase domain. Met-591–Val-599 contributes to the ATP binding site. Tyr-611 carries the post-translational modification Phosphotyrosine; by autocatalysis. Lys-614 contacts ATP. The tract at residues Glu-639 to Met-880 is insert loop. Phosphoserine is present on Ser-707. 2 disordered regions span residues Asp-772 to Arg-818 and Phe-832 to Ser-856. Residues Ser-785–Ile-798 are compositionally biased toward polar residues. Residue Thr-794 is modified to Phosphothreonine. Positions Ser-837–Ser-856 are enriched in low complexity. The Proton acceptor role is filled by Asp-929. The residue at position 974 (Thr-974) is a Phosphothreonine. The interval Leu-1080–Asn-1108 is disordered. Ser-1086 carries the phosphoserine modification. Polar residues predominate over residues Gln-1097 to Asn-1108.

This sequence belongs to the protein kinase superfamily. Ser/Thr protein kinase family. GCN2 subfamily. As to quaternary structure, forms dimers with HSPA5/BIP in resting cells. Homotetramerizes in response to endoplasmic reticulum (ER) stress, leading to its activation. Interacts with HSP90B1/GRP94. Interacts with DNAJC3; inhibiting EIF2AK3/PERK activity. Interacts with ATAD3A; ATAD3A and EIF2S1/eIF-2-alpha occupy a common binding site within the cytoplasmic loop of EIF2AK3/PERK, leading to prevent EIF2AK3/PERK association with its substrate EIF2S1/eIF-2-alpha. Interacts with MFN2. Interacts with TMEM33. Interacts with PDIA6. Interacts with LACC1. Oligomerization of the N-terminal ER luminal domain by ER stress promotes EIF2AK3/PERK trans-autophosphorylation of the C-terminal cytoplasmic kinase domain at multiple residues including Thr-974 on the kinase activation loop. Autophosphorylated at Tyr-611 following endoplasmic reticulum stress, leading to activate its activity. Dephosphorylated at Tyr-611 by PTPN1/PTP1B, leading to inactivate its enzyme activity. Phosphorylation at Thr-794 by AKT (AKT1, AKT2 and/or AKT3) inactivates EIF2AK3/PERK. In terms of processing, ADP-ribosylated by PARP16 upon ER stress, which increases kinase activity. As to expression, ubiquitous.

It localises to the endoplasmic reticulum membrane. It carries out the reaction L-seryl-[protein] + ATP = O-phospho-L-seryl-[protein] + ADP + H(+). The enzyme catalyses L-threonyl-[protein] + ATP = O-phospho-L-threonyl-[protein] + ADP + H(+). It catalyses the reaction L-tyrosyl-[protein] + ATP = O-phospho-L-tyrosyl-[protein] + ADP + H(+). Inhibited by HSPA5/BIP in absence of stress. Perturbation in protein folding in the endoplasmic reticulum (ER) promotes reversible dissociation from HSPA5/BIP and oligomerization, resulting in trans-autophosphorylation and kinase activity induction. Inactivated following phosphorylation at Thr-794 by AKT (AKT1, AKT2 and/or AKT3). Inhibited by ATAD3A at mitochondria-endoplasmic reticulum contact sites, providing a safe haven for mitochondrial protein translation during ER stress. In terms of biological role, metabolic-stress sensing protein kinase that phosphorylates the alpha subunit of eukaryotic translation initiation factor 2 (EIF2S1/eIF-2-alpha) in response to various stress, such as unfolded protein response (UPR). Key effector of the integrated stress response (ISR) to unfolded proteins: EIF2AK3/PERK specifically recognizes and binds misfolded proteins, leading to its activation and EIF2S1/eIF-2-alpha phosphorylation. EIF2S1/eIF-2-alpha phosphorylation in response to stress converts EIF2S1/eIF-2-alpha in a global protein synthesis inhibitor, leading to a global attenuation of cap-dependent translation, while concomitantly initiating the preferential translation of ISR-specific mRNAs, such as the transcriptional activators ATF4 and QRICH1, and hence allowing ATF4- and QRICH1-mediated reprogramming. The EIF2AK3/PERK-mediated unfolded protein response increases mitochondrial oxidative phosphorylation by promoting ATF4-mediated expression of COX7A2L/SCAF1, thereby increasing formation of respiratory chain supercomplexes. In contrast to most subcellular compartments, mitochondria are protected from the EIF2AK3/PERK-mediated unfolded protein response due to EIF2AK3/PERK inhibition by ATAD3A at mitochondria-endoplasmic reticulum contact sites. In addition to EIF2S1/eIF-2-alpha, also phosphorylates NFE2L2/NRF2 in response to stress, promoting release of NFE2L2/NRF2 from the BCR(KEAP1) complex, leading to nuclear accumulation and activation of NFE2L2/NRF2. Serves as a critical effector of unfolded protein response (UPR)-induced G1 growth arrest due to the loss of cyclin-D1 (CCND1). Involved in control of mitochondrial morphology and function. This chain is Eukaryotic translation initiation factor 2-alpha kinase 3 (Eif2ak3), found in Rattus norvegicus (Rat).